A 697-amino-acid chain; its full sequence is Beta-galactosidase 17 (697 aa).

A signal peptide spans 1 to 35 (MAMTSWPSTGRQRRHQLASMLLLVLVVVGIYVPVF). The active-site Proton donor is the glutamate 218. The Nucleophile role is filled by glutamate 301. N-linked (GlcNAc...) asparagine glycans are attached at residues asparagine 333, asparagine 519, asparagine 573, asparagine 583, and asparagine 690.

The protein belongs to the glycosyl hydrolase 35 family. As to expression, ubiquitous, with higher expression levels in roots and siliques.

It localises to the secreted. The protein localises to the extracellular space. Its subcellular location is the apoplast. It carries out the reaction Hydrolysis of terminal non-reducing beta-D-galactose residues in beta-D-galactosides.. This Arabidopsis thaliana (Mouse-ear cress) protein is Beta-galactosidase 17 (BGAL17).